Reading from the N-terminus, the 306-residue chain is Sulfate adenylyltransferase subunit 2 (306 aa).

It belongs to the PAPS reductase family. CysD subfamily. As to quaternary structure, heterodimer composed of CysD, the smaller subunit, and CysN.

It carries out the reaction sulfate + ATP + H(+) = adenosine 5'-phosphosulfate + diphosphate. The protein operates within sulfur metabolism; hydrogen sulfide biosynthesis; sulfite from sulfate: step 1/3. In terms of biological role, with CysN forms the ATP sulfurylase (ATPS) that catalyzes the adenylation of sulfate producing adenosine 5'-phosphosulfate (APS) and diphosphate, the first enzymatic step in sulfur assimilation pathway. APS synthesis involves the formation of a high-energy phosphoric-sulfuric acid anhydride bond driven by GTP hydrolysis by CysN coupled to ATP hydrolysis by CysD. This chain is Sulfate adenylyltransferase subunit 2, found in Brucella anthropi (strain ATCC 49188 / DSM 6882 / CCUG 24695 / JCM 21032 / LMG 3331 / NBRC 15819 / NCTC 12168 / Alc 37) (Ochrobactrum anthropi).